The following is a 136-amino-acid chain: S-protein homolog 17 (136 aa).

Positions 1–22 (MKNLSIFMFVFSLCMFGHVSRA) are cleaved as a signal peptide.

It belongs to the plant self-incompatibility (S1) protein family.

It is found in the secreted. This chain is S-protein homolog 17, found in Arabidopsis thaliana (Mouse-ear cress).